The sequence spans 900 residues: Minor teichoic acid biosynthesis protein GgaB (900 aa).

It belongs to the glycosyltransferase 2 family.

Its pathway is cell wall biogenesis; poly(glucopyranosyl N-acetylgalactosamine 1-phosphate) teichoic acid biosynthesis. Its function is as follows. Involved in the biosynthesis of galactosamine-containing minor teichoic acid, a non-essential cell wall polymer in B.subtilis 168. In Bacillus subtilis (strain 168), this protein is Minor teichoic acid biosynthesis protein GgaB (ggaB).